The sequence spans 192 residues: Adenylate kinase (192 aa).

10 to 15 (GAGKGT) is a binding site for ATP. An NMP region spans residues 30–56 (GTGGMLRALEPESGEQIHLRIDRGHFA). Residues Thr31, Arg36, 82–85 (GFPR), and Gln89 contribute to the AMP site. Positions 123 to 133 (KRGETENRADD) are LID. Residue Arg124 participates in ATP binding. 2 residues coordinate AMP: Arg130 and Arg141. Position 169 (Asp169) interacts with ATP.

Belongs to the adenylate kinase family. As to quaternary structure, monomer.

Its subcellular location is the cytoplasm. It carries out the reaction AMP + ATP = 2 ADP. It participates in purine metabolism; AMP biosynthesis via salvage pathway; AMP from ADP: step 1/1. Its function is as follows. Catalyzes the reversible transfer of the terminal phosphate group between ATP and AMP. Plays an important role in cellular energy homeostasis and in adenine nucleotide metabolism. The sequence is that of Adenylate kinase from Rhodopirellula baltica (strain DSM 10527 / NCIMB 13988 / SH1).